The following is a 127-amino-acid chain: DNA-directed RNA polymerase subunit omega (127 aa).

Belongs to the RNA polymerase subunit omega family. In terms of assembly, the RNAP catalytic core consists of 2 alpha, 1 beta, 1 beta' and 1 omega subunit. When a sigma factor is associated with the core the holoenzyme is formed, which can initiate transcription.

The catalysed reaction is RNA(n) + a ribonucleoside 5'-triphosphate = RNA(n+1) + diphosphate. In terms of biological role, promotes RNA polymerase assembly. Latches the N- and C-terminal regions of the beta' subunit thereby facilitating its interaction with the beta and alpha subunits. The protein is DNA-directed RNA polymerase subunit omega of Rickettsia peacockii (strain Rustic).